The chain runs to 525 residues: NADH-quinone oxidoreductase subunit N (525 aa).

Helical transmembrane passes span 26-46 (LSPM…DAFA), 53-73 (VLQP…VVLL), 90-110 (PTLF…LLVA), 143-163 (VQTE…LFVA), 167-187 (LLVM…LCGL), 202-222 (YFLL…FAYG), 246-266 (LYLS…AAPF), 278-298 (PTPI…GALL), 314-334 (PVIW…ALTQ), 341-361 (LAYS…GSNI), 368-388 (MFYL…VSLV), 411-431 (LAGT…TSGF), 449-469 (LVVV…RVIV), and 487-507 (PTLT…LGVA).

The protein belongs to the complex I subunit 2 family. NDH-1 is composed of 14 different subunits. Subunits NuoA, H, J, K, L, M, N constitute the membrane sector of the complex.

It is found in the cell membrane. It catalyses the reaction a quinone + NADH + 5 H(+)(in) = a quinol + NAD(+) + 4 H(+)(out). Functionally, NDH-1 shuttles electrons from NADH, via FMN and iron-sulfur (Fe-S) centers, to quinones in the respiratory chain. The immediate electron acceptor for the enzyme in this species is believed to be a menaquinone. Couples the redox reaction to proton translocation (for every two electrons transferred, four hydrogen ions are translocated across the cytoplasmic membrane), and thus conserves the redox energy in a proton gradient. This Parafrankia sp. (strain EAN1pec) protein is NADH-quinone oxidoreductase subunit N.